The chain runs to 223 residues: Adenylate kinase 4, mitochondrial (223 aa).

Residue Gly-15 to Thr-20 participates in a ribonucleoside 5'-triphosphate binding. Residues Ser-35–Val-64 form an NMP region. Ser-36 and Arg-41 together coordinate AMP. Lys-60 bears the N6-succinyllysine mark. Residues Leu-62–Val-64, Gly-89–Arg-92, and Gln-96 each bind AMP. The segment at Arg-125–Asp-162 is LID. A ribonucleoside 5'-triphosphate contacts are provided by residues Arg-126 and Val-135 to Tyr-136. Arg-170 provides a ligand contact to AMP. Lys-175 bears the N6-acetyllysine mark. N6-acetyllysine; alternate is present on residues Lys-179 and Lys-186. N6-succinyllysine; alternate occurs at positions 179 and 186. Thr-199 provides a ligand contact to a ribonucleoside 5'-triphosphate.

Belongs to the adenylate kinase family. AK3 subfamily. In terms of assembly, monomer. Interacts with SLC25A5/ANT2.

The protein localises to the mitochondrion matrix. It catalyses the reaction a ribonucleoside 5'-phosphate + ATP = a ribonucleoside 5'-diphosphate + ADP. It carries out the reaction AMP + ATP = 2 ADP. The catalysed reaction is GTP + AMP = GDP + ADP. The enzyme catalyses CMP + ATP = CDP + ADP. It catalyses the reaction GTP + CMP = CDP + GDP. It carries out the reaction dAMP + ATP = dADP + ADP. The catalysed reaction is dCMP + ATP = dCDP + ADP. The enzyme catalyses a 2'-deoxyribonucleoside 5'-diphosphate + ATP = a 2'-deoxyribonucleoside 5'-triphosphate + ADP. It catalyses the reaction a ribonucleoside 5'-diphosphate + ATP = a ribonucleoside 5'-triphosphate + ADP. It carries out the reaction GDP + ATP = GTP + ADP. The catalysed reaction is CDP + GTP = CTP + GDP. The enzyme catalyses CDP + ATP = CTP + ADP. It catalyses the reaction UDP + ATP = UTP + ADP. It carries out the reaction GTP + UDP = UTP + GDP. The catalysed reaction is dADP + GTP = dATP + GDP. The enzyme catalyses dCDP + GTP = dCTP + GDP. It catalyses the reaction dCDP + ATP = dCTP + ADP. It carries out the reaction dGDP + ATP = dGTP + ADP. The catalysed reaction is dTDP + GTP = dTTP + GDP. The enzyme catalyses dTDP + ATP = dTTP + ADP. In terms of biological role, broad-specificity mitochondrial nucleoside phosphate kinase involved in cellular nucleotide homeostasis by catalyzing nucleoside-phosphate interconversions. Similar to other adenylate kinases, preferentially catalyzes the phosphorylation of the nucleoside monophosphate AMP with ATP as phosphate donor to produce ADP. Phosphorylates only AMP when using GTP as phosphate donor. In vitro, can also catalyze the phosphorylation of CMP, dAMP and dCMP and use GTP as an alternate phosphate donor. Moreover, exhibits a diphosphate kinase activity, producing ATP, CTP, GTP, UTP, TTP, dATP, dCTP and dGTP from the corresponding diphosphate substrates with either ATP or GTP as phosphate donors. Plays a role in controlling cellular ATP levels by regulating phosphorylation and activation of the energy sensor protein kinase AMPK. Plays a protective role in the cellular response to oxidative stress. The polypeptide is Adenylate kinase 4, mitochondrial (Pongo abelii (Sumatran orangutan)).